Here is a 257-residue protein sequence, read N- to C-terminus: NAD-capped RNA hydrolase NudC (257 aa).

R69 is a substrate binding site. Zn(2+) contacts are provided by C98 and C101. E111 serves as a coordination point for substrate. Zn(2+) contacts are provided by C116 and C119. Substrate is bound at residue Y124. Positions 125–248 constitute a Nudix hydrolase domain; it reads PQIAPCIIVA…TVARRLIEDT (124 aa). Residues A158, E174, and E178 each coordinate a divalent metal cation. The short motif at 159 to 180 is the Nudix box element; the sequence is GFVEVGETLEQAVAREVMEESG. 192 to 199 serves as a coordination point for substrate; the sequence is QPWPFPQS. E219 contributes to the a divalent metal cation binding site. A241 provides a ligand contact to substrate.

It belongs to the Nudix hydrolase family. NudC subfamily. Homodimer. It depends on Mg(2+) as a cofactor. Mn(2+) is required as a cofactor. Zn(2+) serves as cofactor.

The catalysed reaction is a 5'-end NAD(+)-phospho-ribonucleoside in mRNA + H2O = a 5'-end phospho-adenosine-phospho-ribonucleoside in mRNA + beta-nicotinamide D-ribonucleotide + 2 H(+). The enzyme catalyses NAD(+) + H2O = beta-nicotinamide D-ribonucleotide + AMP + 2 H(+). It catalyses the reaction NADH + H2O = reduced beta-nicotinamide D-ribonucleotide + AMP + 2 H(+). Functionally, mRNA decapping enzyme that specifically removes the nicotinamide adenine dinucleotide (NAD) cap from a subset of mRNAs by hydrolyzing the diphosphate linkage to produce nicotinamide mononucleotide (NMN) and 5' monophosphate mRNA. The NAD-cap is present at the 5'-end of some mRNAs and stabilizes RNA against 5'-processing. Has preference for mRNAs with a 5'-end purine. Catalyzes the hydrolysis of a broad range of dinucleotide pyrophosphates. In Citrobacter koseri (strain ATCC BAA-895 / CDC 4225-83 / SGSC4696), this protein is NAD-capped RNA hydrolase NudC.